A 262-amino-acid polypeptide reads, in one-letter code: Glutamate racemase (262 aa).

Substrate is bound by residues 5-6 (DS) and 37-38 (YG). Catalysis depends on C69, which acts as the Proton donor/acceptor. Residue 70–71 (NT) participates in substrate binding. C181 acts as the Proton donor/acceptor in catalysis. Substrate is bound at residue 182 to 183 (TH).

Belongs to the aspartate/glutamate racemases family.

It carries out the reaction L-glutamate = D-glutamate. It functions in the pathway cell wall biogenesis; peptidoglycan biosynthesis. Provides the (R)-glutamate required for cell wall biosynthesis. The sequence is that of Glutamate racemase from Buchnera aphidicola subsp. Acyrthosiphon pisum (strain 5A).